Consider the following 360-residue polypeptide: Protein phosphatase 1 regulatory subunit 7 (360 aa).

The interval 1–64 is disordered; sequence MAAERGAGQQ…GEEDPEEEHE (64 aa). Position 2 is an N-acetylalanine (Ala-2). Ser-12, Ser-24, Ser-27, Ser-44, and Ser-47 each carry phosphoserine. A compositionally biased stretch (basic and acidic residues) spans 17–34; that stretch reads EVDRRVESEESGDEEGKK. The segment covering 53–63 has biased composition (acidic residues); the sequence is ERGEEDPEEEH. LRR repeat units lie at residues 77–98, 99–120, 121–142, 143–164, 165–186, 187–208, 209–230, 231–252, 253–274, 275–296, and 297–318; these read DAEDVDLNHYRIGKIEGFEVLK, KVKTLCLRQNLIKCIENLEELQ, SLRELDLYDNQIKKIENLEALT, ELEILDISFNLLRNIEGVDKLT, RLKKLFLVNNKISKIENLSNLH, QLQMLELGSNRIRAIENIDTLT, NLESLFLGKNKITKLQNLDALT, NLTVLSMQSNRLTKIEGLQNLV, NLRELYLSHNGIEVIEGLENNN, KLTMLDIASNRIKKIENISHLT, and ELQEFWMNDNLLESWSDLDELK. Ser-322 is subject to Phosphoserine. Residues 331 to 360 enclose the LRRCT domain; that stretch reads NPLQKDPQYRRKVMLALPSVRQIDATFVRF.

Belongs to the SDS22 family. As to quaternary structure, interacts with PPP1CA, PPP1CB and PPP1CC/PPP1G isoform 1. In terms of tissue distribution, widely expressed.

The protein resides in the nucleus. Functionally, regulatory subunit of protein phosphatase 1. The chain is Protein phosphatase 1 regulatory subunit 7 (PPP1R7) from Homo sapiens (Human).